Reading from the N-terminus, the 427-residue chain is Glutamate-1-semialdehyde 2,1-aminomutase (427 aa).

The residue at position 265 (lysine 265) is an N6-(pyridoxal phosphate)lysine.

The protein belongs to the class-III pyridoxal-phosphate-dependent aminotransferase family. HemL subfamily. Homodimer. Pyridoxal 5'-phosphate serves as cofactor.

It is found in the cytoplasm. It carries out the reaction (S)-4-amino-5-oxopentanoate = 5-aminolevulinate. It participates in porphyrin-containing compound metabolism; protoporphyrin-IX biosynthesis; 5-aminolevulinate from L-glutamyl-tRNA(Glu): step 2/2. This is Glutamate-1-semialdehyde 2,1-aminomutase from Idiomarina loihiensis (strain ATCC BAA-735 / DSM 15497 / L2-TR).